We begin with the raw amino-acid sequence, 37 residues long: Large ribosomal subunit protein bL36 (37 aa).

Belongs to the bacterial ribosomal protein bL36 family.

In Desulforamulus reducens (strain ATCC BAA-1160 / DSM 100696 / MI-1) (Desulfotomaculum reducens), this protein is Large ribosomal subunit protein bL36.